Reading from the N-terminus, the 534-residue chain is Flavonoid-6-hydroxylase (534 aa).

Residues 3–23 (FISFVYTLIAFSSLLYFYLIW) form a helical membrane-spanning segment. Residue Cys-467 participates in heme binding.

It belongs to the cytochrome P450 family. It depends on heme as a cofactor. Expressed in leaves.

The protein localises to the membrane. It catalyses the reaction genkwanin + reduced [NADPH--hemoprotein reductase] + O2 = scutellarein 7-methyl ether + oxidized [NADPH--hemoprotein reductase] + H2O. The enzyme catalyses (2S)-sakuranetin + reduced [NADPH--hemoprotein reductase] + O2 = (2S)-7-methylcarthamidin + oxidized [NADPH--hemoprotein reductase] + H2O + H(+). It carries out the reaction apigenin 4',7-dimethyl ether + reduced [NADPH--hemoprotein reductase] + O2 = ladanein + oxidized [NADPH--hemoprotein reductase] + H2O + H(+). The catalysed reaction is (2S)-naringenin 4',7-dimethyl ether + reduced [NADPH--hemoprotein reductase] + O2 = (2S)-carthamidin-4',7-dimethyl ether + oxidized [NADPH--hemoprotein reductase] + H2O + H(+). Its pathway is flavonoid metabolism. Its function is as follows. Hydroxylase involved in the biosynthesis of polymethoxylated flavonoids natural products such as nevadensin and salvigenin, aroma compounds which contribute to the flavor of sweet basil, and exhibit pharmacological activities such as anti-allergic, anti-oxidant, antibacterial, anti-proliferative, and anti-inflammatory effects. Catalyzes the 6-hydroxylation of 7-O-methylated precursors such as the conversion of genkwanin (GENK) to scutellarein-7-methyl ether (SCU7Me). Can also use, with a lower efficiency, apigenin-7,4'-dimethyl ether (AdM), naringenin-7-methyl ether (SAK) and naringenin-7,4'-dimethyl ether (NdM) as substrates. This Ocimum basilicum (Sweet basil) protein is Flavonoid-6-hydroxylase.